We begin with the raw amino-acid sequence, 534 residues long: MELSPRSPPEMLESDCPSPLELKSAPSKKMWIKLRSLLRYMVKQLENGEVNIEELKKNLEYTASLLEAVYIDETRQILDTEDELQELRSDAVPSEVRDWLASTFTQQTRAKGPSEEKPKFRSIVHAVQAGIFVERMFRRTYTSVGPTYSTAVLNCLKNVDLWCFDVFSLNRAADDHALRTIVFELLTRHNLISRFKIPTVFLMTFLDALETGYGKYKNPYHNQIHAADVTQTVHCFLLRTGMVHCLSEIEVLAIIFAAAIHDYEHTGTTNSFHIQTKSECAILYNDRSVLENHHISSVFRMMQDDEMNIFINLTKDEFVELRALVIEMVLATDMSCHFQQVKSMKTALQQLERIDKSKALSLLLHAADISHPTKQWSVHSRWTKALMEEFFRQGDKEAELGLPFSPLCDRTSTLVAQSQIGFIDFIVEPTFSVLTDVAEKSVQPTGDDDSKSKNQPSFQWRQPSLDVEVGDPNPDVVSFRSTWTKYIQENKQKWKERAASGITNQMSIDELSPCEEEAPASPAEDEHNQNGNLD.

Positions Met1 to Glu21 are disordered. 2 positions are modified to phosphoserine: Ser7 and Ser14. 2 calmodulin-binding regions span residues Ser27–Asn47 and Glu116–Arg139. The PDEase domain maps to Val144–Gly501. The Proton donor role is filled by His221. Zn(2+) is bound by residues His225, His261, Asp262, and Asp368. A Mg(2+)-binding site is contributed by Asp262. Disordered stretches follow at residues Val442 to Asn473 and Trp494 to Asp534. The span at Lys453–Gln462 shows a compositional bias: polar residues. 2 positions are modified to phosphoserine: Ser464 and Ser512.

The protein belongs to the cyclic nucleotide phosphodiesterase family. PDE1 subfamily. As to quaternary structure, homodimer. Zn(2+) serves as cofactor. It depends on Mg(2+) as a cofactor. As to expression, expressed in central nervous system regions. Most abundant in basal ganglia. Also found in kidney papilla and adrenal medulla.

Its subcellular location is the cytoplasm. The protein localises to the cytosol. The catalysed reaction is a nucleoside 3',5'-cyclic phosphate + H2O = a nucleoside 5'-phosphate + H(+). The enzyme catalyses 3',5'-cyclic GMP + H2O = GMP + H(+). It carries out the reaction 3',5'-cyclic AMP + H2O = AMP + H(+). Type I PDE are activated by the binding of calmodulin in the presence of Ca(2+). Cyclic nucleotide phosphodiesterase with a dual specificity for the second messengers cAMP and cGMP, which are key regulators of many important physiological processes. Has a preference for cGMP as a substrate. The protein is Dual specificity calcium/calmodulin-dependent 3',5'-cyclic nucleotide phosphodiesterase 1B of Bos taurus (Bovine).